The primary structure comprises 396 residues: Elongation factor Tu (396 aa).

Positions 10 to 206 (KPHVNVGTIG…TMDSYIPEPV (197 aa)) constitute a tr-type G domain. Residues 19–26 (GHVDHGKT) form a G1 region. 19 to 26 (GHVDHGKT) is a GTP binding site. Position 26 (Thr26) interacts with Mg(2+). The segment at 60–64 (GITIS) is G2. The interval 81–84 (DCPG) is G3. GTP contacts are provided by residues 81-85 (DCPGH) and 136-139 (NKAD). Residues 136-139 (NKAD) form a G4 region. The G5 stretch occupies residues 174 to 176 (SAL).

This sequence belongs to the TRAFAC class translation factor GTPase superfamily. Classic translation factor GTPase family. EF-Tu/EF-1A subfamily. As to quaternary structure, monomer.

It localises to the cytoplasm. The catalysed reaction is GTP + H2O = GDP + phosphate + H(+). Its function is as follows. GTP hydrolase that promotes the GTP-dependent binding of aminoacyl-tRNA to the A-site of ribosomes during protein biosynthesis. In Legionella pneumophila (strain Lens), this protein is Elongation factor Tu.